Reading from the N-terminus, the 141-residue chain is Large ribosomal subunit protein uL13 (141 aa).

The protein belongs to the universal ribosomal protein uL13 family. In terms of assembly, part of the 50S ribosomal subunit.

In terms of biological role, this protein is one of the early assembly proteins of the 50S ribosomal subunit, although it is not seen to bind rRNA by itself. It is important during the early stages of 50S assembly. The polypeptide is Large ribosomal subunit protein uL13 (Helicobacter acinonychis (strain Sheeba)).